A 184-amino-acid polypeptide reads, in one-letter code: Photosystem I assembly protein Ycf4 (184 aa).

2 helical membrane-spanning segments follow: residues 22 to 42 (FCWA…GISS) and 57 to 77 (IIFF…LFIS).

It belongs to the Ycf4 family.

It is found in the plastid. Its subcellular location is the chloroplast thylakoid membrane. Seems to be required for the assembly of the photosystem I complex. The sequence is that of Photosystem I assembly protein Ycf4 from Populus alba (White poplar).